The primary structure comprises 603 residues: Growth-regulating factor 6 (603 aa).

The disordered stretch occupies residues 34–58; it reads KHGRGNAGDQEHEWRPPAKQARGGD. The region spanning 158–193 is the QLQ domain; the sequence is PFTPSQWIELEHQALIYKYLAANSPVPHSLLIPIRR. The WRC domain occupies 223-267; that stretch reads DPEPGRCRRTDGKKWRCSRDAVADQKYCERHMNRGRHRSRKHVEG. 2 consecutive short sequence motifs (bipartite nuclear localization signal) follow at residues 228–238 and 256–263; these read RCRRTDGKKWR and RGRHRSRK. Low complexity predominate over residues 561-571; sequence FGSVSSSTGSS. The disordered stretch occupies residues 561-582; that stretch reads FGSVSSSTGSSPRLENHSVYDG.

This sequence belongs to the GRF family.

The protein localises to the nucleus. Its function is as follows. Transcription activator that plays a regulatory role in gibberellin-induced stem elongation. This Oryza sativa subsp. japonica (Rice) protein is Growth-regulating factor 6 (GRF6).